Here is a 157-residue protein sequence, read N- to C-terminus: uncharacterized protein (157 aa).

Residues L9–T146 form the N-acetyltransferase domain.

This is an uncharacterized protein from Bacillus cereus (strain ZK / E33L).